The primary structure comprises 154 residues: Protein X (154 aa).

The tract at residues 68–117 (PCALRFTSARRMETTVNAHRNLPKVLHKRTLGLSAMSTTDLEAYFKDCVF) is mitochondrial targeting sequence.

This sequence belongs to the orthohepadnavirus protein X family. In terms of assembly, may form homodimer. May interact with host CEBPA, CFLAR, CREB1, DDB1, E4F1, HBXIP, HSPD1/HSP60, NFKBIA, POLR2E and SMAD4. Interacts with host SMC5-SMC6 complex and induces its degradation. Interacts with host TRPC4AP; leading to prevent ubiquitination of TRPC4AP. Interacts with host PLSCR1; this interaction promotes ubiquitination and degradation of HBx and impairs HBx-mediated cell proliferation. In terms of processing, a fraction may be phosphorylated in insect cells and HepG2 cells, a human hepatoblastoma cell line. Phosphorylated in vitro by host protein kinase C or mitogen-activated protein kinase. N-acetylated in insect cells.

Its subcellular location is the host cytoplasm. The protein localises to the host nucleus. It localises to the host mitochondrion. In terms of biological role, multifunctional protein that plays a role in silencing host antiviral defenses and promoting viral transcription. Does not seem to be essential for HBV infection. May be directly involved in development of cirrhosis and liver cancer (hepatocellular carcinoma). Most of cytosolic activities involve modulation of cytosolic calcium. The effect on apoptosis is controversial depending on the cell types in which the studies have been conducted. May induce apoptosis by localizing in mitochondria and causing loss of mitochondrial membrane potential. May also modulate apoptosis by binding host CFLAR, a key regulator of the death-inducing signaling complex (DISC). Promotes viral transcription by using the host E3 ubiquitin ligase DDB1 to target the SMC5-SMC6 complex to proteasomal degradation. This host complex would otherwise bind to viral episomal DNA, and prevents its transcription. Moderately stimulates transcription of many different viral and cellular transcription elements. Promoters and enhancers stimulated by HBx contain DNA binding sites for NF-kappa-B, AP-1, AP-2, c-EBP, ATF/CREB, or the calcium-activated factor NF-AT. The polypeptide is Protein X (Homo sapiens (Human)).